Here is a 426-residue protein sequence, read N- to C-terminus: MKHLTEMVRQHKAGKTNAIYAVCSAHPLVLEAAIRYASANQTPLLIEATSNQVDQFGGYTGMTPADFRGFVCQLADSLNFPQDALILGGDHLGPNRWQNLPAAQAMANADDLIKSYVAAGFKKIHLDCSMSCQDDPIPLTDDIVAERAARLAKVAEETCLEHFGEADLEYVIGTEVPVPGGAHETLSELAVTTPDAARATLEAHRHAFEKQGLNAIWPRIIALVVQPGVEFDHTNVIDYQPAKASALSQMVENYETLIFEAHSTDYQTPQSLRQLVIDHFAILKVGPALTFALREALFSLAAIEEELVPAKVCSGLRQVLEDVMLDRPEYWQSHYHGDGNARRLARGYSYSDRVRYYWPDSQIDDAFAHLVRNLADSPIPLPLISQYLPLQYVKVRSGELQPTPRELIINHIQDILAQYHTACEGQ.

Belongs to the GatZ/KbaZ family. KbaZ subfamily. As to quaternary structure, forms a complex with KbaY.

Its pathway is carbohydrate metabolism; D-tagatose 6-phosphate degradation; D-glyceraldehyde 3-phosphate and glycerone phosphate from D-tagatose 6-phosphate: step 2/2. Its function is as follows. Component of the tagatose-1,6-bisphosphate aldolase KbaYZ that is required for full activity and stability of the Y subunit. Could have a chaperone-like function for the proper and stable folding of KbaY. When expressed alone, KbaZ does not show any aldolase activity. This chain is D-tagatose-1,6-bisphosphate aldolase subunit KbaZ, found in Escherichia coli (strain ATCC 8739 / DSM 1576 / NBRC 3972 / NCIMB 8545 / WDCM 00012 / Crooks).